We begin with the raw amino-acid sequence, 91 residues long: PqqA binding protein (91 aa).

This sequence belongs to the PqqD family. In terms of assembly, monomer. Interacts with PqqE.

It functions in the pathway cofactor biosynthesis; pyrroloquinoline quinone biosynthesis. Functions as a PqqA binding protein and presents PqqA to PqqE, in the pyrroloquinoline quinone (PQQ) biosynthetic pathway. This is PqqA binding protein from Pseudomonas fluorescens (strain Pf0-1).